Consider the following 346-residue polypeptide: Probable long-chain-alcohol O-fatty-acyltransferase 6 (346 aa).

A run of 8 helical transmembrane segments spans residues 7–27 (LFIQVWVSAIISVTYCYYLTP), 36–56 (LLSVLPVCVLFLIIPIFFSTV), 59–79 (SFTIAFFLSGLAVPKLILFAL), 116–136 (FPKWVFALKVFIFGALLLQAY), 146–166 (FLLGLYALHIYLELEISLTLI), 228–248 (FFAIFATFLVSGVAHEILYFY), 255–275 (TWEVTWFFVLHGFCMAAEVAL), and 289–309 (PAVSRLLTVGFVFVTGVWLFS).

It belongs to the wax synthase family.

It is found in the membrane. The enzyme catalyses a long chain fatty alcohol + a fatty acyl-CoA = a wax ester + CoA. Catalyzes the final step in the synthesis of long-chain linear esters (waxes). The polypeptide is Probable long-chain-alcohol O-fatty-acyltransferase 6 (AT6) (Arabidopsis thaliana (Mouse-ear cress)).